The primary structure comprises 1723 residues: Probable outer membrane protein pmp20 (1723 aa).

The N-terminal stretch at 1 to 21 (MKWLPATAVFAAVLPALTAFG) is a signal peptide. Disordered stretches follow at residues 78-100 (VTPD…SGAT) and 139-161 (LSSS…SASA). Composition is skewed to low complexity over residues 85 to 100 (SSSN…SGAT) and 140 to 161 (SSSS…SASA). An Autotransporter domain is found at 1434–1723 (EDPAFNNFWA…MANGGIRFVF (290 aa)).

The protein belongs to the PMP outer membrane protein family.

It localises to the secreted. The protein localises to the cell wall. Its subcellular location is the cell outer membrane. The sequence is that of Probable outer membrane protein pmp20 (pmp20) from Chlamydia pneumoniae (Chlamydophila pneumoniae).